The chain runs to 222 residues: Sigma non-opioid intracellular receptor 1 (222 aa).

The Lumenal portion of the chain corresponds to M1–W7. The chain crosses the membrane as a helical span at residues V8 to L29. At A30–C222 the chain is on the cytoplasmic side. Residues S98 to L105 form an important for ligand-binding region. A C-terminal hydrophobic region region spans residues F176–C222.

It belongs to the ERG2 family. Homotrimer.

The protein localises to the nucleus inner membrane. It localises to the nucleus outer membrane. It is found in the nucleus envelope. The protein resides in the cytoplasmic vesicle. Its subcellular location is the endoplasmic reticulum membrane. The protein localises to the membrane. Functionally, may function in lipid transport from the endoplasmic reticulum and be involved in a wide array of cellular functions probably through regulation of the biogenesis of lipid microdomains at the plasma membrane. May regulate calcium efflux at the endoplasmic reticulum. This is Sigma non-opioid intracellular receptor 1 (SIGMAR1) from Gallus gallus (Chicken).